The following is a 24-amino-acid chain: Frenatin-4 (24 aa).

Expressed by the skin glands.

Its subcellular location is the secreted. In terms of biological role, very weak antimicrobial peptide since it does not show activity below 100 ug/ml against Bacillus cereus, Escherichia coli, Leuconostoc mesenteroides, Micrococcus luteus, Pastewella haemolytica, Staphylococcus aureus, Streptococcus faecalis and Streptococcus uberis. The sequence is that of Frenatin-4 from Nyctimystes infrafrenatus (White-lipped tree frog).